The chain runs to 243 residues: MRHTLFISDLHLEEETPSITAHFLYFLKHQAPKADAIYILGDFFEAWIGDDNQTPFNRKIIESLQTLARTKPTYFMRGNRDFLIGQRFAAMTGVSLLEDPSVIQLYNKPVLLMHGDSLCTLDHKHQAYRRKIMKPWVQKLMLSLPLSLRRKLAKKFREQSRRHNRTLSYGIKDVTPEEVNRVMKEQNVELLIHGHTHRPAIHDLTINGNPTKRIVLGAWHHGGSVLRYAQDGSFELQAFKIDL.

Residues Asp-9, His-11, Asp-42, Asn-79, and His-114 each contribute to the Mn(2+) site. 79 to 80 (NR) lines the substrate pocket. The substrate site is built by Asp-122, Ser-160, Asn-164, and His-195. Residues His-195 and His-197 each coordinate Mn(2+).

The protein belongs to the LpxH family. Mn(2+) is required as a cofactor.

It is found in the cell inner membrane. It catalyses the reaction UDP-2-N,3-O-bis[(3R)-3-hydroxytetradecanoyl]-alpha-D-glucosamine + H2O = 2-N,3-O-bis[(3R)-3-hydroxytetradecanoyl]-alpha-D-glucosaminyl 1-phosphate + UMP + 2 H(+). Its pathway is glycolipid biosynthesis; lipid IV(A) biosynthesis; lipid IV(A) from (3R)-3-hydroxytetradecanoyl-[acyl-carrier-protein] and UDP-N-acetyl-alpha-D-glucosamine: step 4/6. Hydrolyzes the pyrophosphate bond of UDP-2,3-diacylglucosamine to yield 2,3-diacylglucosamine 1-phosphate (lipid X) and UMP by catalyzing the attack of water at the alpha-P atom. Involved in the biosynthesis of lipid A, a phosphorylated glycolipid that anchors the lipopolysaccharide to the outer membrane of the cell. The chain is UDP-2,3-diacylglucosamine hydrolase from Coxiella burnetii (strain Dugway 5J108-111).